Consider the following 331-residue polypeptide: XylDLEGF operon transcriptional activator 3 (331 aa).

One can recognise an HTH araC/xylS-type domain in the interval Glu214 to Arg315. 2 consecutive DNA-binding regions (H-T-H motif) follow at residues Glu231–Ala252 and Val282–Phe305.

Its subcellular location is the cytoplasm. Functionally, regulatory protein of the TOL plasmid xyl operons. XylS activates the xylXYZLTEGFJQKIH operon required for the degradation of toluene, m-xylene and p-xylene. This is XylDLEGF operon transcriptional activator 3 (xylS3) from Pseudomonas putida (Arthrobacter siderocapsulatus).